A 372-amino-acid polypeptide reads, in one-letter code: N-acetylneuraminate epimerase 1 (372 aa).

The first 25 residues, 1–25 (MITMKVKNFIYLPFCLFIGTSVAGA), serve as a signal peptide directing secretion. Kelch repeat units lie at residues 44 to 88 (KIYI…TIID), 90 to 141 (KIYV…FIHN), 143 to 177 (HAVS…KVNR), 178 to 223 (DYFS…IFAE), 226 to 269 (IYIL…VSGA), 291 to 340 (EKYS…PWQG), and 342 to 371 (MLIL…IKIV). Catalysis depends on E232, which acts as the Proton acceptor.

The protein belongs to the NanM family. In terms of assembly, homodimer.

The protein resides in the periplasm. It catalyses the reaction N-acetyl-alpha-neuraminate = N-acetyl-beta-neuraminate. In terms of biological role, converts alpha-N-acetylneuranimic acid (Neu5Ac) to the beta-anomer, accelerating the equilibrium between the alpha- and beta-anomers. Probably facilitates sialidase-negative bacteria to compete successfully for limited amounts of extracellular Neu5Ac, which is likely taken up in the beta-anomer. In addition, the rapid removal of sialic acid from solution might be advantageous to the bacterium to damp down host responses. This Escherichia coli O6:H1 (strain CFT073 / ATCC 700928 / UPEC) protein is N-acetylneuraminate epimerase 1.